The primary structure comprises 323 residues: Methionyl-tRNA formyltransferase (323 aa).

A (6S)-5,6,7,8-tetrahydrofolate-binding site is contributed by 118-121 (SLLP).

This sequence belongs to the Fmt family.

The catalysed reaction is L-methionyl-tRNA(fMet) + (6R)-10-formyltetrahydrofolate = N-formyl-L-methionyl-tRNA(fMet) + (6S)-5,6,7,8-tetrahydrofolate + H(+). Its function is as follows. Attaches a formyl group to the free amino group of methionyl-tRNA(fMet). The formyl group appears to play a dual role in the initiator identity of N-formylmethionyl-tRNA by promoting its recognition by IF2 and preventing the misappropriation of this tRNA by the elongation apparatus. The sequence is that of Methionyl-tRNA formyltransferase from Buchnera aphidicola subsp. Baizongia pistaciae (strain Bp).